The primary structure comprises 185 residues: Elongation factor P (185 aa).

This sequence belongs to the elongation factor P family.

The protein resides in the cytoplasm. It participates in protein biosynthesis; polypeptide chain elongation. Involved in peptide bond synthesis. Stimulates efficient translation and peptide-bond synthesis on native or reconstituted 70S ribosomes in vitro. Probably functions indirectly by altering the affinity of the ribosome for aminoacyl-tRNA, thus increasing their reactivity as acceptors for peptidyl transferase. In Nostoc punctiforme (strain ATCC 29133 / PCC 73102), this protein is Elongation factor P.